The chain runs to 303 residues: Zinc transporter ZIP9-A (303 aa).

Residues 7-27 (ISLLSLAMLVGCYVSGIIPLA) form a helical membrane-spanning segment. N29 carries an N-linked (GlcNAc...) asparagine glycan. The next 5 membrane-spanning stretches (helical) occupy residues 35–55 (LKLVTVLGAGLLCGTALAVII), 102–122 (AYIGVSLVLGFVFMLLVDQIG), 142–162 (ITTTLGLVVHAAADGVALGAA), 172–192 (LIVFVAIMLHKAPAAFGLVSF), and 206–226 (HLLVFALAAPVLSMLTYLGLS). N-linked (GlcNAc...) asparagine glycosylation is present at N237. Helical transmembrane passes span 240–260 (GVAMLFSAGTFLYVATVHVLP) and 282–302 (LEVCALVLGCLIPLVLSIGHQ).

It belongs to the ZIP transporter (TC 2.A.5) family.

It is found in the golgi apparatus. The protein resides in the trans-Golgi network membrane. Its subcellular location is the cell membrane. It localises to the cytoplasm. The protein localises to the perinuclear region. It is found in the mitochondrion. The protein resides in the nucleus. It catalyses the reaction Zn(2+)(in) = Zn(2+)(out). In terms of biological role, transports zinc ions across cell and organelle membranes into the cytoplasm and regulates intracellular zinc homeostasis. Participates in the zinc ions efflux out of the secretory compartments. Regulates intracellular zinc level, resulting in the enhancement of AKT1 and MAPK3/MAPK1 (Erk1/2) phosphorylation in response to the BCR activation. Also functions as a membrane androgen receptor that mediates, through a G protein, the non-classical androgen signaling pathway, characterized by the activation of MAPK3/MAPK1 (Erk1/2) and transcription factors CREB1 or ATF1. Moreover, has dual functions as a membrane-bound androgen receptor and as an androgen-dependent zinc transporter both of which are mediated through an inhibitory G protein (Gi) that mediates both MAP kinase and zinc signaling leading to the androgen-dependent apoptotic process. The sequence is that of Zinc transporter ZIP9-A (slc39a9-a) from Xenopus laevis (African clawed frog).